Consider the following 413-residue polypeptide: PAB1-binding protein 2 (413 aa).

Low complexity predominate over residues 1-23; that stretch reads MSTETTKPSITTTPTTVLVSPNT. Positions 1-36 are disordered; that stretch reads MSTETTKPSITTTPTTVLVSPNTLKRKKGEDTSEEQ. KH domains are found at residues 66–130, 148–213, and 330–394; these read DVHL…YGMI, EISI…TFYI, and FVQQ…IMLI.

As to quaternary structure, interacts with PAB1.

It localises to the nucleus. The polypeptide is PAB1-binding protein 2 (PBP2) (Saccharomyces cerevisiae (strain ATCC 204508 / S288c) (Baker's yeast)).